A 63-amino-acid polypeptide reads, in one-letter code: Sperm protamine P1 (63 aa).

Positions 1-63 are disordered; it reads MARYRRHSRS…RYSRRGRRRY (63 aa).

The protein belongs to the protamine P1 family. Testis.

It localises to the nucleus. The protein resides in the chromosome. Its function is as follows. Protamines substitute for histones in the chromatin of sperm during the haploid phase of spermatogenesis. They compact sperm DNA into a highly condensed, stable and inactive complex. This Sminthopsis griseoventer (Gray-bellied dunnart) protein is Sperm protamine P1 (PRM1).